Consider the following 885-residue polypeptide: Alanine--tRNA ligase (885 aa).

The Zn(2+) site is built by His-564, His-568, Cys-676, and His-680.

This sequence belongs to the class-II aminoacyl-tRNA synthetase family. It depends on Zn(2+) as a cofactor.

The protein localises to the cytoplasm. The catalysed reaction is tRNA(Ala) + L-alanine + ATP = L-alanyl-tRNA(Ala) + AMP + diphosphate. Functionally, catalyzes the attachment of alanine to tRNA(Ala) in a two-step reaction: alanine is first activated by ATP to form Ala-AMP and then transferred to the acceptor end of tRNA(Ala). Also edits incorrectly charged Ser-tRNA(Ala) and Gly-tRNA(Ala) via its editing domain. This Brucella anthropi (strain ATCC 49188 / DSM 6882 / CCUG 24695 / JCM 21032 / LMG 3331 / NBRC 15819 / NCTC 12168 / Alc 37) (Ochrobactrum anthropi) protein is Alanine--tRNA ligase.